The following is a 534-amino-acid chain: MTSTPVSPVVLVILDGWGYQENSDGNAIATANTPIIDSLWTAYPSTFIQTSGKAVGLPAGQMGNSEVGHLNLGAGRTVPQELVRIADAIEDGSLATNPALDKVCKQVSQASTKLHLIGLCSKGGVHAHSDHLLALLKLAKEHNISQVCIHAILDGRDTPPKSAKDEILRLQKQIAHIGVGQIVTLSGRYFAMDRDRRWDRIQQAYDVMVNDQVAVPRDWSPLDAITDAYDHKTTDEFLPPTRIAPGAIEAGDGVIFFNFRPDRARQLTQAFVDPKFDGFEREQVKPLHFVTFTQYDSDLPTDVAFKPQNLDNILGEIVANHGLKQLRLAETEKYAHVTYFFNGGIEDPLPGEDRILVPSPMVSTYDQDPPMSAAKVTEEAIAALDKRIYSLMVINYANTDMVGHTGMMDATIQAVETVDGCLGKLLNQVINVGGTLLITADHGNAERMWDETGNPWTAHTTNPVPFILVEGEGRKIPAHGTDVQLRADGRLADIAPTILDILQLPKPEEMTGSTLIQAAGFEVRQNKSPVRIHR.

Aspartate 15 and serine 65 together coordinate Mn(2+). The Phosphoserine intermediate role is filled by serine 65. Substrate contacts are provided by residues histidine 126, 156-157 (RD), arginine 188, arginine 194, 260-263 (RPDR), and lysine 333. Positions 400, 404, 441, 442, and 459 each coordinate Mn(2+).

This sequence belongs to the BPG-independent phosphoglycerate mutase family. Monomer. It depends on Mn(2+) as a cofactor.

It carries out the reaction (2R)-2-phosphoglycerate = (2R)-3-phosphoglycerate. It participates in carbohydrate degradation; glycolysis; pyruvate from D-glyceraldehyde 3-phosphate: step 3/5. Functionally, catalyzes the interconversion of 2-phosphoglycerate and 3-phosphoglycerate. This chain is 2,3-bisphosphoglycerate-independent phosphoglycerate mutase, found in Acaryochloris marina (strain MBIC 11017).